A 302-amino-acid chain; its full sequence is Homoserine O-acetyltransferase (302 aa).

Cysteine 142 functions as the Acyl-thioester intermediate in the catalytic mechanism. Positions 163 and 192 each coordinate substrate. Histidine 235 acts as the Proton acceptor in catalysis. Glutamate 237 is an active-site residue. Position 249 (arginine 249) interacts with substrate.

The protein belongs to the MetA family.

Its subcellular location is the cytoplasm. The enzyme catalyses L-homoserine + acetyl-CoA = O-acetyl-L-homoserine + CoA. The protein operates within amino-acid biosynthesis; L-methionine biosynthesis via de novo pathway; O-acetyl-L-homoserine from L-homoserine: step 1/1. In terms of biological role, transfers an acetyl group from acetyl-CoA to L-homoserine, forming acetyl-L-homoserine. The protein is Homoserine O-acetyltransferase of Geobacillus kaustophilus.